The primary structure comprises 1299 residues: Probable membrane antigen 75 (1299 aa).

It is found in the virion tegument. The polypeptide is Probable membrane antigen 75 (75) (Saimiriine herpesvirus 2 (strain 11) (SaHV-2)).